The sequence spans 251 residues: MEGGAAASTPAALPYYVAFSQLLGLTLVAMTGAWLGLYRGGIAWESDLQFNAHPLCMVIGLIFLQGDALLVYRVFRNEAKRTTKVLHGLLHIFALVIALVGLVAVFDYHRKEGYADLYSLHSWCGILVFVLYFVQWLVGFSFFLFPGASFSLRSRYRPQHIFFGATIFLLSVGTALLGLKEALLFKLRDKYSAFEPEGVLANVLGLLLACFGGAVLYILTRADWKRPSQAEEQALSMDFKTLTEGDSPGSQ.

M1 is modified (N-acetylmethionine). Residues 1–16 (MEGGAAASTPAALPYY) lie on the Cytoplasmic side of the membrane. The helical transmembrane segment at 17–37 (VAFSQLLGLTLVAMTGAWLGL) threads the bilayer. In terms of domain architecture, Cytochrome b561 spans 19-220 (FSQLLGLTLV…FGGAVLYILT (202 aa)). Residues 38 to 51 (YRGGIAWESDLQFN) lie on the Vesicular side of the membrane. Residues 52-72 (AHPLCMVIGLIFLQGDALLVY) form a helical membrane-spanning segment. Positions 53, 73, and 80 each coordinate heme b. At 73–85 (RVFRNEAKRTTKV) the chain is on the cytoplasmic side. 2 residues coordinate L-ascorbate: K80 and K84. Residues 86–106 (LHGLLHIFALVIALVGLVAVF) form a helical membrane-spanning segment. Residues H87, 116–119 (DLYS), and H121 contribute to the heme b site. Topologically, residues 107–124 (DYHRKEGYADLYSLHSWC) are vesicular. A helical membrane pass occupies residues 125-145 (GILVFVLYFVQWLVGFSFFLF). At 146–158 (PGASFSLRSRYRP) the chain is on the cytoplasmic side. R153 lines the L-ascorbate pocket. The helical transmembrane segment at 159–179 (QHIFFGATIFLLSVGTALLGL) threads the bilayer. Positions 160 and 181 each coordinate heme b. Topologically, residues 180–198 (KEALLFKLRDKYSAFEPEG) are vesicular. Residues 199 to 219 (VLANVLGLLLACFGGAVLYIL) traverse the membrane as a helical segment. Residues 220 to 251 (TRADWKRPSQAEEQALSMDFKTLTEGDSPGSQ) are Cytoplasmic-facing. K225 lines the heme b pocket. S247 carries the post-translational modification Phosphoserine.

The cofactor is heme b.

The protein resides in the cytoplasmic vesicle. It is found in the secretory vesicle. It localises to the chromaffin granule membrane. It catalyses the reaction monodehydro-L-ascorbate radical(out) + L-ascorbate(in) = monodehydro-L-ascorbate radical(in) + L-ascorbate(out). In terms of biological role, transmembrane reductase that uses ascorbate as an electron donor in the cytoplasm and transfers electrons across membranes to reduce monodehydro-L-ascorbate radical in the lumen of secretory vesicles. It is therefore involved the regeneration and homeostasis within secretory vesicles of ascorbate which in turn provides reducing equivalents needed to support the activity of intravesicular enzymes. This chain is Transmembrane ascorbate-dependent reductase CYB561 (CYB561), found in Pongo abelii (Sumatran orangutan).